We begin with the raw amino-acid sequence, 291 residues long: Phycobilisome 32.1 kDa linker polypeptide, phycocyanin-associated, rod 1 (291 aa).

The PBS-linker domain occupies Ala2 to Arg179. The CpcD-like domain occupies Ser236–Ala288.

The protein belongs to the phycobilisome linker protein family. In terms of assembly, part of 2 PBS rod complexes, the conventional CpcG-PBS rod and a photosystem I-specific CpcL-PBS rod, both of which include ferredoxin--NADP reductase (petH). CpcG-PBS has on average 3 stacked phycocyanin hexamers (PC, CpcA and CpcB). Linker CpcG connects the PC stack to the thylakoid, the hexamers are linked by 1 copy of CpcC1, 1 copy of CpcC2 and the stack is terminated by a single copy of CpcD. The CpcL-PBS has on average 5 stacked phycocyanin hexamers (PC, CpcA and CpcB). Linker CpcL connects the PC stack to the thylakoid, the hexamers are linked by 1 copy of CpcC1, 3 copies of CpcC2 and the stack is terminated by a single copy of CpcD.

The protein resides in the cellular thylakoid membrane. Its function is as follows. Rod linker protein, connecting hexameric phycocyanin (PC, made by cpcA and cpcB) rods in the phycobilisome (PBS). PC is the major phycobiliprotein in PBS rods. Linker polypeptides determine the state of aggregation and the location of the disk-shaped phycobiliprotein units within the phycobilisome and modulate their spectroscopic properties in order to mediate a directed and optimal energy transfer. The chain is Phycobilisome 32.1 kDa linker polypeptide, phycocyanin-associated, rod 1 (cpcC1) from Synechocystis sp. (strain ATCC 27184 / PCC 6803 / Kazusa).